A 148-amino-acid polypeptide reads, in one-letter code: Nucleoside diphosphate kinase (148 aa).

6 residues coordinate ATP: Lys9, Phe57, Arg85, Thr91, Arg102, and Asn112. Thr91 bears the Phosphothreonine mark. His115 acts as the Pros-phosphohistidine intermediate in catalysis. Ser122 is modified (phosphoserine).

The protein belongs to the NDK family. Homotetramer. It depends on Mg(2+) as a cofactor.

It is found in the cytoplasm. The catalysed reaction is a 2'-deoxyribonucleoside 5'-diphosphate + ATP = a 2'-deoxyribonucleoside 5'-triphosphate + ADP. It catalyses the reaction a ribonucleoside 5'-diphosphate + ATP = a ribonucleoside 5'-triphosphate + ADP. In terms of biological role, major role in the synthesis of nucleoside triphosphates other than ATP. The ATP gamma phosphate is transferred to the NDP beta phosphate via a ping-pong mechanism, using a phosphorylated active-site intermediate. In Bacillus cereus (strain ATCC 14579 / DSM 31 / CCUG 7414 / JCM 2152 / NBRC 15305 / NCIMB 9373 / NCTC 2599 / NRRL B-3711), this protein is Nucleoside diphosphate kinase.